A 204-amino-acid polypeptide reads, in one-letter code: WW domain-containing protein C11B10.08 (204 aa).

The 37-residue stretch at 7–43 (EGLPNGWVAQWDERYKCYFYVNESDPKAKPQWECPVR) folds into the WW domain. The interval 32–117 (PKAKPQWECP…GYPQQPYYYP (86 aa)) is disordered. Composition is skewed to low complexity over residues 66–100 (YSNSAAPATPAASASSAAPAPAPAASQNRAYGAAP) and 108–117 (GYPQQPYYYP).

The protein localises to the cytoplasm. It is found in the nucleus. This chain is WW domain-containing protein C11B10.08, found in Schizosaccharomyces pombe (strain 972 / ATCC 24843) (Fission yeast).